The following is a 405-amino-acid chain: Tyrosine--tRNA ligase (405 aa).

Tyr-35 serves as a coordination point for L-tyrosine. The 'HIGH' region signature appears at 40-49 (TTSSSLHIGH). The L-tyrosine site is built by Tyr-166 and Gln-170. The short motif at 226-230 (KMGKS) is the 'KMSKS' region element. Residue Lys-229 participates in ATP binding. One can recognise an S4 RNA-binding domain in the interval 340-404 (ILLIDLMLDS…VGKKKFLRIV (65 aa)).

This sequence belongs to the class-I aminoacyl-tRNA synthetase family. TyrS type 1 subfamily. Homodimer.

Its subcellular location is the cytoplasm. It catalyses the reaction tRNA(Tyr) + L-tyrosine + ATP = L-tyrosyl-tRNA(Tyr) + AMP + diphosphate + H(+). Functionally, catalyzes the attachment of tyrosine to tRNA(Tyr) in a two-step reaction: tyrosine is first activated by ATP to form Tyr-AMP and then transferred to the acceptor end of tRNA(Tyr). This Borrelia garinii subsp. bavariensis (strain ATCC BAA-2496 / DSM 23469 / PBi) (Borreliella bavariensis) protein is Tyrosine--tRNA ligase.